A 517-amino-acid chain; its full sequence is Acetylcholine receptor subunit gamma (517 aa).

The signal sequence occupies residues 1-22; it reads MHGGQGPLLLLLLLAVCLGAQG. The Extracellular portion of the chain corresponds to 23–240; that stretch reads RNQEERLLAD…VVFYLLIQRK (218 aa). 2 N-linked (GlcNAc...) asparagine glycosylation sites follow: asparagine 52 and asparagine 163. The cysteines at positions 150 and 164 are disulfide-linked. Transmembrane regions (helical) follow at residues 241 to 265, 275 to 293, and 309 to 330; these read PLFY…IHFL, TVAI…LVAK, and LTFL…LNVS. Residues 331 to 474 are Cytoplasmic-facing; it reads LRSPHTHSMA…WFLVGRVLDR (144 aa). A helical transmembrane segment spans residues 475-495; sequence VCFLAMLSLFICGTAGIFLMA.

This sequence belongs to the ligand-gated ion channel (TC 1.A.9) family. Acetylcholine receptor (TC 1.A.9.1) subfamily. Gamma/CHRNG sub-subfamily. In terms of assembly, pentamer of two alpha chains, and one each of the beta, delta, and gamma (in immature muscle) or epsilon (in mature muscle) chains.

The protein resides in the postsynaptic cell membrane. It localises to the cell membrane. It catalyses the reaction K(+)(in) = K(+)(out). The enzyme catalyses Na(+)(in) = Na(+)(out). Its function is as follows. After binding acetylcholine, the AChR responds by an extensive change in conformation that affects all subunits and leads to opening of an ion-conducting channel across the plasma membrane. The chain is Acetylcholine receptor subunit gamma from Homo sapiens (Human).